The sequence spans 199 residues: Rho-related protein racG (199 aa).

GTP is bound by residues Ala13, Gly15, Lys16, Thr17, Cys18, Tyr32, and Thr35. Residue Thr17 coordinates Mg(2+). 2 consecutive short sequence motifs (switch) follow at residues 26-37 (NAFPNEYIPTVF) and 57-75 (DTAG…YPST). Thr35 provides a ligand contact to Mg(2+). 3 residues coordinate GTP: Lys116, Asp118, and Ala159. Residue Cys196 is modified to Cysteine methyl ester. Cys196 carries the S-geranylgeranyl cysteine lipid modification. The propeptide at 197 to 199 (SLF) is removed in mature form.

The protein belongs to the small GTPase superfamily. Rho family. Mg(2+) serves as cofactor.

It localises to the cell membrane. The protein resides in the cytoplasm. It is found in the cytoskeleton. It carries out the reaction GTP + H2O = GDP + phosphate + H(+). With respect to regulation, regulated by guanine nucleotide exchange factors (GEFs) which promote the exchange of bound GDP for free GTP, GTPase activating proteins (GAPs) which increase the GTP hydrolysis activity, and GDP dissociation inhibitors which inhibit the dissociation of the nucleotide from the GTPase. Its function is as follows. Small GTPase which cycles between active GTP-bound and inactive GDP-bound states. Involved in actin cytoskeleton remodeling during capping of surface receptors and uroid formation. This is Rho-related protein racG from Entamoeba histolytica (strain ATCC 30459 / HM-1:IMSS / ABRM).